Here is a 60-residue protein sequence, read N- to C-terminus: UPF0434 protein YPA_0693 (60 aa).

The protein belongs to the UPF0434 family.

This Yersinia pestis bv. Antiqua (strain Antiqua) protein is UPF0434 protein YPA_0693.